The sequence spans 90 residues: uncharacterized protein (90 aa).

This is an uncharacterized protein from Escherichia coli O157:H7.